A 72-amino-acid chain; its full sequence is Translation initiation factor IF-1 (72 aa).

In terms of domain architecture, S1-like spans 1–72 (MAKEETIQMQ…SRARITFRAK (72 aa)).

Belongs to the IF-1 family. As to quaternary structure, component of the 30S ribosomal translation pre-initiation complex which assembles on the 30S ribosome in the order IF-2 and IF-3, IF-1 and N-formylmethionyl-tRNA(fMet); mRNA recruitment can occur at any time during PIC assembly.

Its subcellular location is the cytoplasm. Functionally, one of the essential components for the initiation of protein synthesis. Stabilizes the binding of IF-2 and IF-3 on the 30S subunit to which N-formylmethionyl-tRNA(fMet) subsequently binds. Helps modulate mRNA selection, yielding the 30S pre-initiation complex (PIC). Upon addition of the 50S ribosomal subunit IF-1, IF-2 and IF-3 are released leaving the mature 70S translation initiation complex. This Nitrosospira multiformis (strain ATCC 25196 / NCIMB 11849 / C 71) protein is Translation initiation factor IF-1.